The chain runs to 552 residues: DNA ligase (552 aa).

ATP is bound at residue E229. K231 serves as the catalytic N6-AMP-lysine intermediate. ATP is bound by residues R236 and E283. Residues E283 and E377 each coordinate Mg(2+). The ATP site is built by K382 and K397.

It belongs to the ATP-dependent DNA ligase family. In terms of assembly, interacts with host TOP2A and TOP2B. Mg(2+) serves as cofactor.

It is found in the host cytoplasm. It catalyses the reaction ATP + (deoxyribonucleotide)n-3'-hydroxyl + 5'-phospho-(deoxyribonucleotide)m = (deoxyribonucleotide)n+m + AMP + diphosphate.. Functionally, DNA ligase that seals nicks in double-stranded DNA during DNA replication, DNA recombination and DNA repair. Recruits cellular topoisomerase II to sites of viral replication and assembly. The protein is DNA ligase (OPG180) of Vaccinia virus (strain Ankara) (VACV).